The following is a 219-amino-acid chain: Thiamine-phosphate synthase (219 aa).

4-amino-2-methyl-5-(diphosphooxymethyl)pyrimidine contacts are provided by residues 44-48 and Asn79; that span reads QLREK. Mg(2+)-binding residues include Asp80 and Asp99. Residue Ser117 coordinates 4-amino-2-methyl-5-(diphosphooxymethyl)pyrimidine. Residue 143–145 coordinates 2-[(2R,5Z)-2-carboxy-4-methylthiazol-5(2H)-ylidene]ethyl phosphate; that stretch reads TST. Position 146 (Lys146) interacts with 4-amino-2-methyl-5-(diphosphooxymethyl)pyrimidine. 2-[(2R,5Z)-2-carboxy-4-methylthiazol-5(2H)-ylidene]ethyl phosphate-binding positions include Gly175 and 195–196; that span reads IS.

Belongs to the thiamine-phosphate synthase family. Mg(2+) is required as a cofactor.

The enzyme catalyses 2-[(2R,5Z)-2-carboxy-4-methylthiazol-5(2H)-ylidene]ethyl phosphate + 4-amino-2-methyl-5-(diphosphooxymethyl)pyrimidine + 2 H(+) = thiamine phosphate + CO2 + diphosphate. It catalyses the reaction 2-(2-carboxy-4-methylthiazol-5-yl)ethyl phosphate + 4-amino-2-methyl-5-(diphosphooxymethyl)pyrimidine + 2 H(+) = thiamine phosphate + CO2 + diphosphate. The catalysed reaction is 4-methyl-5-(2-phosphooxyethyl)-thiazole + 4-amino-2-methyl-5-(diphosphooxymethyl)pyrimidine + H(+) = thiamine phosphate + diphosphate. The protein operates within cofactor biosynthesis; thiamine diphosphate biosynthesis; thiamine phosphate from 4-amino-2-methyl-5-diphosphomethylpyrimidine and 4-methyl-5-(2-phosphoethyl)-thiazole: step 1/1. Its function is as follows. Condenses 4-methyl-5-(beta-hydroxyethyl)thiazole monophosphate (THZ-P) and 2-methyl-4-amino-5-hydroxymethyl pyrimidine pyrophosphate (HMP-PP) to form thiamine monophosphate (TMP). The polypeptide is Thiamine-phosphate synthase (Bacillus mycoides (strain KBAB4) (Bacillus weihenstephanensis)).